The chain runs to 393 residues: RNA polymerase II holoenzyme cyclin-like subunit (393 aa).

The region spanning 51-146 (ICKRLNLRQR…LLEEMEFDMV (96 aa)) is the Cyclin N-terminal domain.

Belongs to the cyclin family. Cyclin C subfamily. As to quaternary structure, component of the SRB8-11 complex, a regulatory module of the Mediator complex.

It is found in the nucleus. Functionally, component of the SRB8-11 complex. The SRB8-11 complex is a regulatory module of the Mediator complex which is itself involved in regulation of basal and activated RNA polymerase II-dependent transcription. The SRB8-11 complex may be involved in the transcriptional repression of a subset of genes regulated by Mediator. It may inhibit the association of the Mediator complex with RNA polymerase II to form the holoenzyme complex. The SRB8-11 complex phosphorylates the C-terminal domain (CTD) of the largest subunit of RNA polymerase II. The protein is RNA polymerase II holoenzyme cyclin-like subunit (SSN8) of Mycosarcoma maydis (Corn smut fungus).